A 235-amino-acid polypeptide reads, in one-letter code: Ribitol-5-phosphate cytidylyltransferase (235 aa).

CTP-binding positions include 7-10, 82-88, and S113; these read LAGG and GADRNTS.

This sequence belongs to the IspD/TarI cytidylyltransferase family. TarI subfamily.

The catalysed reaction is D-ribitol 5-phosphate + CTP + H(+) = CDP-L-ribitol + diphosphate. The protein operates within cell wall biogenesis; poly(ribitol phosphate) teichoic acid biosynthesis. Its function is as follows. Catalyzes the transfer of the cytidylyl group of CTP to D-ribitol 5-phosphate. This is Ribitol-5-phosphate cytidylyltransferase from Streptococcus pneumoniae (strain ATCC 700669 / Spain 23F-1).